The following is a 158-amino-acid chain: MQNLSLSLVILSVLIAVTLACKCREQSTKESFCNAHWVSHVKVKVRVGKQGLPEGSERKGLNNLRYTVQHVEVFKKPSNMTTLPDEIFTPSEAPACGLKIAAGHEYLLAGRVEGPNALYTVLCGQVLPDDRSQTSFENVLEWKNVPQTLQSQVKSIKC.

The N-terminal stretch at 1–20 (MQNLSLSLVILSVLIAVTLA) is a signal peptide. Cys21 provides a ligand contact to Zn(2+). Residues 21–25 (CKCRE) form an involved in metalloproteinase-binding region. Disulfide bonds link Cys21-Cys96, Cys23-Cys123, and Cys33-Cys158. In terms of domain architecture, NTR spans 21–158 (CKCREQSTKE…LQSQVKSIKC (138 aa)). A glycan (N-linked (GlcNAc...) asparagine) is linked at Asn79. An involved in metalloproteinase-binding region spans residues 93-94 (AP).

Belongs to the protease inhibitor I35 (TIMP) family.

The protein resides in the secreted. Its function is as follows. Complexes with metalloproteinases and irreversibly inactivates them by binding to their catalytic zinc cofactor. The protein is Putative metalloproteinase inhibitor tag-225 (tag-225) of Caenorhabditis elegans.